The following is a 380-amino-acid chain: Peroxisomal membrane protein PEX13 (380 aa).

A disordered region spans residues 1-30; it reads MSDSSAPDLPSKPSSLNAGQSSSLQTTNTG. Topologically, residues 1-230 are lumenal; the sequence is MSDSSAPDLP…NKNTNKLSLK (230 aa). Residues 12–30 are compositionally biased toward polar residues; the sequence is KPSSLNAGQSSSLQTTNTG. A helical membrane pass occupies residues 231-251; it reads PLLLFLAAVVGFPYLLKKLIA. Topologically, residues 252–380 are cytoplasmic; the sequence is HLAETSQMNG…DSTEFQKMKT (129 aa). The 68-residue stretch at 277-344 folds into the SH3 domain; the sequence is TKLEFARALY…PYNYVEIIER (68 aa).

This sequence belongs to the peroxin-13 family. In terms of assembly, interacts (via SH3 domain) with PEX14 (via SH3-binding motif); forming the PEX13-PEX14 docking complex.

The protein resides in the peroxisome membrane. Component of the PEX13-PEX14 docking complex, a translocon channel that specifically mediates the import of peroxisomal cargo proteins bound to PEX5 receptor. The PEX13-PEX14 docking complex forms a large import pore which can be opened to a diameter of about 9 nm. Mechanistically, PEX5 receptor along with cargo proteins associates with the PEX14 subunit of the PEX13-PEX14 docking complex in the cytosol, leading to the insertion of the receptor into the organelle membrane with the concomitant translocation of the cargo into the peroxisome matrix. This Komagataella pastoris (Yeast) protein is Peroxisomal membrane protein PEX13 (PEX13).